Reading from the N-terminus, the 493-residue chain is Flagellin (493 aa).

The protein belongs to the bacterial flagellin family.

It localises to the secreted. The protein localises to the bacterial flagellum. Functionally, flagellin is the subunit protein which polymerizes to form the filaments of bacterial flagella. The protein is Flagellin (fliC) of Salmonella rubislaw.